We begin with the raw amino-acid sequence, 375 residues long: Cobalt-precorrin-5B C(1)-methyltransferase (375 aa).

It belongs to the CbiD family.

It catalyses the reaction Co-precorrin-5B + S-adenosyl-L-methionine = Co-precorrin-6A + S-adenosyl-L-homocysteine. Its pathway is cofactor biosynthesis; adenosylcobalamin biosynthesis; cob(II)yrinate a,c-diamide from sirohydrochlorin (anaerobic route): step 6/10. Functionally, catalyzes the methylation of C-1 in cobalt-precorrin-5B to form cobalt-precorrin-6A. The chain is Cobalt-precorrin-5B C(1)-methyltransferase from Paracidovorax citrulli (strain AAC00-1) (Acidovorax citrulli).